A 250-amino-acid chain; its full sequence is DNA repair protein RecO (250 aa).

This sequence belongs to the RecO family.

Its function is as follows. Involved in DNA repair and RecF pathway recombination. The sequence is that of DNA repair protein RecO from Staphylococcus aureus (strain COL).